Reading from the N-terminus, the 388-residue chain is Mitochondrial distribution and morphology protein 12 (388 aa).

An SMP-LTD domain is found at 1-388 (MSLDINWSLL…VFPNFHTVAL (388 aa)). 2 disordered regions span residues 75–101 (DDEGDFAEEEKQREKEREERDKLRNEA) and 209–249 (PMSI…KVSS). Over residues 83–101 (EEKQREKEREERDKLRNEA) the composition is skewed to basic and acidic residues. Positions 234-243 (PSPPAHPAGL) are enriched in pro residues.

The protein belongs to the MDM12 family. In terms of assembly, component of the ER-mitochondria encounter structure (ERMES) or MDM complex, composed of MMM1, MDM10, MDM12 and MDM34. An MMM1 homodimer associates with one molecule of MDM12 on each side in a pairwise head-to-tail manner, and the SMP-LTD domains of MMM1 and MDM12 generate a continuous hydrophobic tunnel for phospholipid trafficking.

It is found in the mitochondrion outer membrane. The protein resides in the endoplasmic reticulum membrane. In terms of biological role, component of the ERMES/MDM complex, which serves as a molecular tether to connect the endoplasmic reticulum (ER) and mitochondria. Components of this complex are involved in the control of mitochondrial shape and protein biogenesis, and function in nonvesicular lipid trafficking between the ER and mitochondria. MDM12 is required for the interaction of the ER-resident membrane protein MMM1 and the outer mitochondrial membrane-resident beta-barrel protein MDM10. The MDM12-MMM1 subcomplex functions in the major beta-barrel assembly pathway that is responsible for biogenesis of all mitochondrial outer membrane beta-barrel proteins, and acts in a late step after the SAM complex. The MDM10-MDM12-MMM1 subcomplex further acts in the TOM40-specific pathway after the action of the MDM12-MMM1 complex. Essential for establishing and maintaining the structure of mitochondria and maintenance of mtDNA nucleoids. This is Mitochondrial distribution and morphology protein 12 from Cryptococcus neoformans var. neoformans serotype D (strain JEC21 / ATCC MYA-565) (Filobasidiella neoformans).